Reading from the N-terminus, the 248-residue chain is MSFVVIIPARFSSTRLPGKPLVDINGKPMIVHVLERVRESGAERIIVATDHEDVARAVEAAGGEVCMTRADHQSGTERLAEVVEKCGFSDDTVIVNVQGDEPMIPAVIIRQVAENLAQRQVGMATLAVPIHSAEEAFNPNAVKVVLDAEGYALYFSRATIPWDRDRFAKSLETVGDTCLRHLGIYGYRAGFIRRYVSWQPSPLEHIEMLEQLRVLWYGEKIHVAIAKAVPGTGVDTADDLERVRAEMR.

It belongs to the KdsB family.

Its subcellular location is the cytoplasm. The enzyme catalyses 3-deoxy-alpha-D-manno-oct-2-ulosonate + CTP = CMP-3-deoxy-beta-D-manno-octulosonate + diphosphate. It functions in the pathway nucleotide-sugar biosynthesis; CMP-3-deoxy-D-manno-octulosonate biosynthesis; CMP-3-deoxy-D-manno-octulosonate from 3-deoxy-D-manno-octulosonate and CTP: step 1/1. Its pathway is bacterial outer membrane biogenesis; lipopolysaccharide biosynthesis. Functionally, activates KDO (a required 8-carbon sugar) for incorporation into bacterial lipopolysaccharide in Gram-negative bacteria. In Salmonella dublin (strain CT_02021853), this protein is 3-deoxy-manno-octulosonate cytidylyltransferase.